A 1270-amino-acid chain; its full sequence is MSSNTVNQRVNFASTKNPLEYPDFLEVQLKSFQDFLQLDTPPEKRKNEGLYKVFAENFPIADTRNNFVLEFLDYYIDPPRYTIDDCIERGLTYSVPLKAKLKLYCTDPDHEDFDTVIQDVFLGPIPYMTDKATFVINGAERVVVSQLHRSPGVFFGQSVHANGTKLYSARIIPFKGSWIEFATDINNVMYAYIDRKKKLPVTTLLRAIGFENDKDILEIFNLAEDVKVNKTNLKRVLGRKLAARVLKTWIEDFVDEDTGEVVSIERNEVIIDRETVLEEVHIDEILESGVQNILLHKDEPNQSDFSIIYNTLQKDPSNSEKEAVLYIYRQLRNADPADDASAREVINNLFFSEKRYDLGDVGRYRINKKLNLTTDMDVRVLTKEDIIEIIKYLIELINSKADVDDIDHLSNRRVRTVGEQLSNQFAVGLARMSRTIRERMNVRDNEVFTPIDLINAKTISSVINSFFGTNALSQFMDQTNPLAEITHKRRMSALGPGGLSRERAGFEVRDVHYTHYGRLCPIETPEGPNIGLISSLCVFAKINELGFIETPYRKVENGKVDLSDNGLVYLTAEEEEEKIIAQGNAPLNDDGTFVRNKVKSRQDADFPVVEPSEVDLMDVSPQQIASIAASLIPFLEHDDANRALMGSNMMRQAVPLLRSEAPIVGTGIERQLVRDSRTQITAEGDGVVDFVDATTIRILYDRTEDEEFVSFEPALKEYRIPKFRKTNQNMTIDLRPICDKGQRVKKGDILTEGYSTEKGELALGKNLLVAYMPWKGYNYEDAIVLNERVVREDLLTSVHVEEYSLEVRETKRGMEELTSDIPNVSEEATKDLDENGIVRIGARIEPGDIMIGKITPKGESDPSPEEKLLRAIFGDKAGDVKDASLKASPSLKGVVIDKKLFSRVIKNRSSKLADKALLPKIDDEFESKVADLKRILVKKLMTLTEGKVSQGVKDYLGAEVIAKGSKFSASDFDSLDFTSIQLSNWTSDDHTNGMVRDLVMNFIKKYKELDAELKRKKFAITIGDELPAGIIQMAKVYIAKKRKIGVGDKMAGRHGNKGIVSRVVRQEDMPFLADGTPVDIVLNPLGVPSRMNIGQIFEAVLGRAGKTLGVKFATPIFDGATMDDLDQWTDKAGLPRYCKTYLCDGGTGEQFDQAATVGVTYMLKLGHMVEDKMHARSIGPYSLITQQPLGGKAQFGGQRFGEMEVWALEGFGAAHILQEILTIKSDDVVGRSKAYEAIVKGEPMPQPGIPESLNVLLHELRGLGLSINLE.

This sequence belongs to the RNA polymerase beta chain family. As to quaternary structure, the RNAP catalytic core consists of 2 alpha, 1 beta, 1 beta' and 1 omega subunit. When a sigma factor is associated with the core the holoenzyme is formed, which can initiate transcription.

It carries out the reaction RNA(n) + a ribonucleoside 5'-triphosphate = RNA(n+1) + diphosphate. Functionally, DNA-dependent RNA polymerase catalyzes the transcription of DNA into RNA using the four ribonucleoside triphosphates as substrates. This is DNA-directed RNA polymerase subunit beta from Bacteroides thetaiotaomicron (strain ATCC 29148 / DSM 2079 / JCM 5827 / CCUG 10774 / NCTC 10582 / VPI-5482 / E50).